A 444-amino-acid polypeptide reads, in one-letter code: L-ornithine N(5)-monooxygenase (444 aa).

FAD-binding positions include 40 to 48 (ERQPAFGWH) and Q59. K64 is a substrate binding site. Position 125 (V125) interacts with FAD. NADP(+) contacts are provided by residues 211-214 (AGQS) and R236. Substrate is bound by residues 250–253 (NEIF) and N280. 280-282 (NYA) serves as a coordination point for NADP(+). FAD is bound at residue 408-410 (RCC). Residues 420–432 (SARRSKTGSRPRT) show a composition bias toward basic residues. The tract at residues 420-444 (SARRSKTGSRPRTMKAWPGPRTKND) is disordered.

This sequence belongs to the lysine N(6)-hydroxylase/L-ornithine N(5)-oxygenase family. FAD serves as cofactor.

It catalyses the reaction L-ornithine + NADPH + O2 = N(5)-hydroxy-L-ornithine + NADP(+) + H2O. The protein operates within siderophore biosynthesis; ornibactin biosynthesis. In terms of biological role, catalyzes the conversion of L-ornithine to N(5)-hydroxyornithine, the first step in the biosynthesis of all hydroxamate-containing siderophores, such as ornibactin. In Burkholderia cepacia (Pseudomonas cepacia), this protein is L-ornithine N(5)-monooxygenase.